We begin with the raw amino-acid sequence, 239 residues long: Skn-1 dependent zygotic transcript 1 protein (239 aa).

In terms of biological role, may have a role in mesendoderm development during embryogenesis. The chain is Skn-1 dependent zygotic transcript 1 protein from Caenorhabditis briggsae.